We begin with the raw amino-acid sequence, 859 residues long: Heterogeneous nuclear ribonucleoprotein U-like protein 1 (859 aa).

Residues 1 to 103 (MDVRRLKVNE…GPDGHYVMDN (103 aa)) form a necessary for interaction with HRMT1L1 region. Residues 3-37 (VRRLKVNELREELQRRGLDTRGLKAELAERLLAAL) form the SAP domain. A disordered region spans residues 36 to 131 (ALEAEEPEDE…SSYDRRPLDM (96 aa)). Over residues 38–54 (EAEEPEDERELEADDDP) the composition is skewed to acidic residues. Over residues 77–88 (QPPPPGLQPHPE) the composition is skewed to pro residues. Residue Lys-117 forms a Glycyl lysine isopeptide (Lys-Gly) (interchain with G-Cter in SUMO1); alternate linkage. Lys-117 is covalently cross-linked (Glycyl lysine isopeptide (Lys-Gly) (interchain with G-Cter in SUMO2); alternate). A compositionally biased stretch (basic and acidic residues) spans 118–130 (QENESSYDRRPLD). Lys-143 participates in a covalent cross-link: Glycyl lysine isopeptide (Lys-Gly) (interchain with G-Cter in SUMO1); alternate. Lys-143 participates in a covalent cross-link: Glycyl lysine isopeptide (Lys-Gly) (interchain with G-Cter in SUMO2); alternate. The segment at 146–206 (MKQEAPPSFL…QPPAEEDEDD (61 aa)) is disordered. Residues Lys-147 and Lys-163 each participate in a glycyl lysine isopeptide (Lys-Gly) (interchain with G-Cter in SUMO2) cross-link. Over residues 174-193 (RPFEENRGRGYFEHREDRRG) the composition is skewed to basic and acidic residues. The B30.2/SPRY domain maps to 192-389 (RGRSPQPPAE…VEFNFGQRAE (198 aa)). Ser-195 bears the Phosphoserine mark. The residue at position 210 (Thr-210) is a Phosphothreonine. The interval 214–859 (IDTYNCDLHF…GSTQGGTSTQ (646 aa)) is necessary for interaction with TP53. Glycyl lysine isopeptide (Lys-Gly) (interchain with G-Cter in SUMO2) cross-links involve residues Lys-271 and Lys-450. Residues 457 to 595 (NAIMDKMRVM…EEADKLVRQY (139 aa)) are necessary for interaction with BRD7 and transcriptional activation. Phosphoserine is present on Ser-513. A Glycyl lysine isopeptide (Lys-Gly) (interchain with G-Cter in SUMO2) cross-link involves residue Lys-540. Basic and acidic residues predominate over residues 595–612 (YNEEGRKAGPPPEKRFDS). A disordered region spans residues 595-814 (YNEEGRKAGP…PPTAQTYPQP (220 aa)). 5 repeat units span residues 613–615 (RGG), 620–622 (RGG), 639–641 (RGG), 645–647 (RGG), and 659–661 (RGG). Gly residues-rich tracts occupy residues 613–626 (RGGGFRGRGGGGGF) and 634–670 (PPGGNRGGFQNRGGGGGSGGGGGNYRGGFNRSGGGGY). The tract at residues 613-661 (RGGGFRGRGGGGGFQRYDNRGPPGGNRGGFQNRGGGGGSGGGGGNYRGG) is 5 X 3 AA repeats of R-G-G. The segment at 613–661 (RGGGFRGRGGGGGFQRYDNRGPPGGNRGGFQNRGGGGGSGGGGGNYRGG) is necessary for transcription repression. The residue at position 639 (Arg-639) is an Asymmetric dimethylarginine. Asymmetric dimethylarginine; alternate is present on residues Arg-645 and Arg-659. Residues Arg-645 and Arg-659 each carry the omega-N-methylarginine; alternate modification. Residues Arg-664 and Arg-674 each carry the omega-N-methylarginine modification. The segment covering 671-696 (NQNRWGNNNRDNNNSNNRGNYNRAPQ) has biased composition (low complexity). A compositionally biased stretch (pro residues) spans 697 to 720 (QQPPPQQPPPPQPPPQQPPPPPSY). Ser-721 carries the post-translational modification Phosphoserine. A compositionally biased stretch (polar residues) spans 728 to 744 (GASSYNKNSNIPGSSAN). Over residues 745–775 (TSTPTVSSYTPPQPSYSQPPYNQGGYTQGYT) the composition is skewed to low complexity. 2 stretches are compositionally biased toward pro residues: residues 776–786 (APPPPPPPPPA) and 796–807 (NPAPYTPPPPPT).

As to quaternary structure, interacts with BRD7, PRMT2, TP53 and NXF1. Associates with histones and BRD7. Post-translationally, methylated.

It localises to the nucleus. In terms of biological role, acts as a basic transcriptional regulator. Represses basic transcription driven by several virus and cellular promoters. When associated with BRD7, activates transcription of glucocorticoid-responsive promoter in the absence of ligand-stimulation. Also plays a role in mRNA processing and transport. Binds avidly to poly(G) and poly(C) RNA homopolymers in vitro. The sequence is that of Heterogeneous nuclear ribonucleoprotein U-like protein 1 (Hnrnpul1) from Mus musculus (Mouse).